We begin with the raw amino-acid sequence, 132 residues long: Small ribosomal subunit protein uS8 (132 aa).

It belongs to the universal ribosomal protein uS8 family. In terms of assembly, part of the 30S ribosomal subunit. Contacts proteins S5 and S12.

In terms of biological role, one of the primary rRNA binding proteins, it binds directly to 16S rRNA central domain where it helps coordinate assembly of the platform of the 30S subunit. In Agrobacterium fabrum (strain C58 / ATCC 33970) (Agrobacterium tumefaciens (strain C58)), this protein is Small ribosomal subunit protein uS8.